A 75-amino-acid polypeptide reads, in one-letter code: Bacteriocin lactococcin-A (75 aa).

A propeptide spanning residues 1–21 is cleaved from the precursor; sequence MKNQLNFNIVSDEELSEANGG. A helical transmembrane segment spans residues 30–52; it reads AAGDLYYNTNTHKYVYQQTQNAF.

Its subcellular location is the secreted. It is found in the host cell membrane. Kills Lactococci. The polypeptide is Bacteriocin lactococcin-A (lcnA) (Lactococcus lactis subsp. cremoris (Streptococcus cremoris)).